The primary structure comprises 188 residues: PRA1 family protein F3 (188 aa).

Transmembrane regions (helical) follow at residues 74–94 (IVVL…LIVF), 95–115 (TVLV…IKLF), 123–143 (TVLI…NATF), and 145–165 (IVGA…VRKT).

The protein belongs to the PRA1 family. In terms of assembly, interacts with PRA1F2 and PRA1D. Interacts with ACD11 and BPA1. Expressed in lateral roots, lateral root caps and columella cells.

The protein localises to the endoplasmic reticulum membrane. It localises to the membrane. The protein resides in the cytoplasm. Its function is as follows. May be involved in both secretory and endocytic intracellular trafficking in the endosomal/prevacuolar compartments. This Arabidopsis thaliana (Mouse-ear cress) protein is PRA1 family protein F3.